The sequence spans 169 residues: Ribosome maturation factor RimM (169 aa).

One can recognise a PRC barrel domain in the interval 97-169 (PGEYYWYQLI…VITVDWDMNF (73 aa)).

This sequence belongs to the RimM family. In terms of assembly, binds ribosomal protein uS19.

The protein localises to the cytoplasm. An accessory protein needed during the final step in the assembly of 30S ribosomal subunit, possibly for assembly of the head region. Essential for efficient processing of 16S rRNA. May be needed both before and after RbfA during the maturation of 16S rRNA. It has affinity for free ribosomal 30S subunits but not for 70S ribosomes. In Legionella pneumophila subsp. pneumophila (strain Philadelphia 1 / ATCC 33152 / DSM 7513), this protein is Ribosome maturation factor RimM.